Reading from the N-terminus, the 2772-residue chain is Replicase polyprotein 1ab (2772 aa).

Residues Arg143–Pro157 show a composition bias toward basic and acidic residues. Residues Arg143–His163 form a disordered region. Catalysis depends on for leader protease activity residues Cys311 and His357. The 192-residue stretch at Gln478 to Phe669 folds into the Alphavirus-like MT domain. 2 disordered regions span residues Ala1277–Ser1301 and Val1400–Ile1442. Residues Val1430–Ile1442 show a composition bias toward polar residues. The Fe2OG dioxygenase domain maps to Val1601–Arg1694. His1619, Asp1621, and His1676 together coordinate Fe cation. 2-oxoglutarate is bound at residue Arg1685. A disordered region spans residues Gly1708–Arg1746. Over residues Val1717–Pro1733 the composition is skewed to polar residues. One can recognise a (+)RNA virus helicase ATP-binding domain in the interval Leu1902 to Thr2066. Positions Ser2067–Ala2233 constitute a (+)RNA virus helicase C-terminal domain. Residues Tyr2502–Thr2615 enclose the RdRp catalytic domain.

This sequence belongs to the ssRNA positive-strand viruses RNA-directed RNA polymerase family. Fe(2+) serves as cofactor.

The enzyme catalyses RNA(n) + a ribonucleoside 5'-triphosphate = RNA(n+1) + diphosphate. It catalyses the reaction ATP + H2O = ADP + phosphate + H(+). RNA-dependent RNA polymerase replicates the viral genome. The protein is Replicase polyprotein 1ab of Grapevine leafroll-associated virus 3 (isolate United States/NY1) (GLRaV-3).